A 296-amino-acid chain; its full sequence is MNKEQLEKMKNGKGFIAALDQSGGSTPKALKEYGINEDQYSNEDEMFQLVHDMRTRVVTSPSFSPDKILGAILFEQTMDREVEGKYTADYLADKGVVPFLKVDKGLAEEQNGVQLMKPIDNLDSLLDRANERHIFGTKMRSNILELNEQGIKDVVEQQFEVAKQIIAKGLVPIIEPEVNINAKDKAEIEKVLKAELKKGLDSLNADQLVMLKLTIPTEANLYKDLAEHPNVVRIVVLSGGYSREKANELLKDNAELIASFSRALASDLRAGQSKEEFDKALGDAVESIYDASVNKN.

The Proton acceptor role is filled by E175. K212 acts as the Schiff-base intermediate with dihydroxyacetone-P in catalysis.

The protein belongs to the class I fructose-bisphosphate aldolase family.

The enzyme catalyses beta-D-fructose 1,6-bisphosphate = D-glyceraldehyde 3-phosphate + dihydroxyacetone phosphate. Its pathway is carbohydrate degradation; glycolysis; D-glyceraldehyde 3-phosphate and glycerone phosphate from D-glucose: step 4/4. This chain is Fructose-bisphosphate aldolase class 1, found in Staphylococcus aureus (strain bovine RF122 / ET3-1).